Reading from the N-terminus, the 209-residue chain is Uracil phosphoribosyltransferase (209 aa).

Residues Arg79, Arg104, and 131–139 (DPMLATGGS) each bind 5-phospho-alpha-D-ribose 1-diphosphate. Uracil contacts are provided by residues Ile194 and 199–201 (GDA). Asp200 is a binding site for 5-phospho-alpha-D-ribose 1-diphosphate.

Belongs to the UPRTase family. Mg(2+) is required as a cofactor.

It catalyses the reaction UMP + diphosphate = 5-phospho-alpha-D-ribose 1-diphosphate + uracil. It participates in pyrimidine metabolism; UMP biosynthesis via salvage pathway; UMP from uracil: step 1/1. Its activity is regulated as follows. Allosterically activated by GTP. Functionally, catalyzes the conversion of uracil and 5-phospho-alpha-D-ribose 1-diphosphate (PRPP) to UMP and diphosphate. The polypeptide is Uracil phosphoribosyltransferase (Desulfitobacterium hafniense (strain DSM 10664 / DCB-2)).